The chain runs to 96 residues: Glutamyl-tRNA(Gln) amidotransferase subunit C (96 aa).

The protein belongs to the GatC family. Heterotrimer of A, B and C subunits.

It carries out the reaction L-glutamyl-tRNA(Gln) + L-glutamine + ATP + H2O = L-glutaminyl-tRNA(Gln) + L-glutamate + ADP + phosphate + H(+). The enzyme catalyses L-aspartyl-tRNA(Asn) + L-glutamine + ATP + H2O = L-asparaginyl-tRNA(Asn) + L-glutamate + ADP + phosphate + 2 H(+). Functionally, allows the formation of correctly charged Asn-tRNA(Asn) or Gln-tRNA(Gln) through the transamidation of misacylated Asp-tRNA(Asn) or Glu-tRNA(Gln) in organisms which lack either or both of asparaginyl-tRNA or glutaminyl-tRNA synthetases. The reaction takes place in the presence of glutamine and ATP through an activated phospho-Asp-tRNA(Asn) or phospho-Glu-tRNA(Gln). This is Glutamyl-tRNA(Gln) amidotransferase subunit C from Neisseria meningitidis serogroup A / serotype 4A (strain DSM 15465 / Z2491).